A 130-amino-acid polypeptide reads, in one-letter code: Small ribosomal subunit protein uS8 (130 aa).

Belongs to the universal ribosomal protein uS8 family. As to quaternary structure, part of the 30S ribosomal subunit. Contacts proteins S5 and S12.

Its function is as follows. One of the primary rRNA binding proteins, it binds directly to 16S rRNA central domain where it helps coordinate assembly of the platform of the 30S subunit. The sequence is that of Small ribosomal subunit protein uS8 from Aliivibrio salmonicida (strain LFI1238) (Vibrio salmonicida (strain LFI1238)).